The sequence spans 326 residues: Target of rapamycin complex subunit LST8 (326 aa).

At methionine 1 the chain carries N-acetylmethionine. WD repeat units lie at residues 1–37, 40–80, 83–122, 126–165, and 168–207; these read MNTT…CTRT, HQDS…PIIS, GVSK…LQCQ, QVNA…NEQL, and EPEF…GDEV. The residue at position 51 (threonine 51) is a Phosphothreonine. Lysine 86 participates in a covalent cross-link: Glycyl lysine isopeptide (Lys-Gly) (interchain with G-Cter in SUMO3). Residues lysine 215, lysine 245, and lysine 261 each participate in a glycyl lysine isopeptide (Lys-Gly) (interchain with G-Cter in SUMO3) cross-link. The stretch at 218–257 is one WD 6 repeat; that stretch reads AHTRYALQCRFSPDSTLLATCSADQTCKIWRTSNFSLMTE. Residues 268-309 form a WD 7 repeat; the sequence is SSRGWMWGCAFSGDSQYIVTASSDNLARLWCVETGEIKREYG. Lysine 305 is covalently cross-linked (Glycyl lysine isopeptide (Lys-Gly) (interchain with G-Cter in SUMO3); alternate). Glycyl lysine isopeptide (Lys-Gly) (interchain with G-Cter in ubiquitin); alternate cross-links involve residues lysine 305 and lysine 313. Lysine 313 is covalently cross-linked (Glycyl lysine isopeptide (Lys-Gly) (interchain with G-Cter in SUMO1); alternate).

This sequence belongs to the WD repeat LST8 family. As to quaternary structure, part of the mechanistic target of rapamycin complex 1 (mTORC1) which contains MTOR, MLST8 and RPTOR. mTORC1 associates with AKT1S1/PRAS40, which inhibits its activity. mTORC1 binds to and is inhibited by FKBP12-rapamycin. Within mTORC1, interacts directly with MTOR and RPTOR. Component of the mechanistic target of rapamycin complex 2 (mTORC2), consisting in two heterotretramers composed of MTOR, MLST8, RICTOR and MAPKAP1/SIN1. Contrary to mTORC1, mTORC2 does not bind to and is not sensitive to FKBP12-rapamycin. mTORC1 and mTORC2 associate with DEPTOR, which regulates their activity. Interacts with RHEB. Interacts with MEAK7. Interacts with SIK3. Interacts with SLC38A7; this interaction promotes the recruitment of mTORC1 to the lysosome and its subsequent activation. Post-translationally, phosphorylation at Thr-51 by CDK1 promotes ubiquitination by the SCF(FBXW7) complex, followed by degradation. In terms of processing, ubiquitination by the SCF(FBXW7) and SCF(FBXW11) complexes following phosphorylation at Thr-51 by CDK1, leads to its degradation by the proteasome. Ubiquitination at Lys-305 and Lys-313 by TRAF2 via 'Lys-63'-linked polyubiquitin chains inhibits formation of the mTORC2 complex, while promoting formation of the mTORC1 complex: ubiquitination disrupts the interaction between MLST8 and MAPKAP1/SIN1 to favor mTORC1 assembly. Deubiquitination at Lys-305 and Lys-313 by OTUD7B promotes MLST8 interaction with MAPKAP1/SIN1, facilitating mTORC2 assembly. Sumoylation with SUMO1, SUMO2 and SUMO3 promotes assembly of both mTORC1 and mTORC2 complexes. Expressed at highest levels in the brain and testis, followed by lung, heart, kidney, skeletal muscle, spleen and liver. Also expressed in epididymal, abdominal and brown fat, small intestine and pancreas.

It localises to the lysosome membrane. The protein resides in the cytoplasm. In terms of biological role, subunit of both mTORC1 and mTORC2, which regulates cell growth and survival in response to nutrient and hormonal signals. mTORC1 is activated in response to growth factors or amino acids. In response to nutrients, mTORC1 is recruited to the lysosome membrane and promotes protein, lipid and nucleotide synthesis by phosphorylating several substrates, such as ribosomal protein S6 kinase (RPS6KB1 and RPS6KB2) and EIF4EBP1 (4E-BP1). In the same time, it inhibits catabolic pathways by phosphorylating the autophagy initiation components ULK1 and ATG13, as well as transcription factor TFEB, a master regulators of lysosomal biogenesis and autophagy. The mTORC1 complex is inhibited in response to starvation and amino acid depletion. Within mTORC1, MLST8 interacts directly with MTOR and enhances its kinase activity. In nutrient-poor conditions, stabilizes the MTOR-RPTOR interaction and favors RPTOR-mediated inhibition of MTOR activity. As part of the mTORC2 complex, transduces signals from growth factors to pathways involved in proliferation, cytoskeletal organization, lipogenesis and anabolic output. mTORC2 is also activated by growth factors, but seems to be nutrient-insensitive. In response to growth factors, mTORC2 phosphorylates and activates AGC protein kinase family members, including AKT (AKT1, AKT2 and AKT3), PKC (PRKCA, PRKCB and PRKCE) and SGK1. mTORC2 functions upstream of Rho GTPases to regulate the actin cytoskeleton, probably by activating one or more Rho-type guanine nucleotide exchange factors. mTORC2 promotes the serum-induced formation of stress-fibers or F-actin. mTORC2 plays a critical role in AKT1 activation by mediating phosphorylation of different sites depending on the context, such as 'Thr-450', 'Ser-473', 'Ser-477' or 'Thr-479', facilitating the phosphorylation of the activation loop of AKT1 on 'Thr-308' by PDPK1/PDK1 which is a prerequisite for full activation. mTORC2 regulates the phosphorylation of SGK1 at 'Ser-422'. mTORC2 also modulates the phosphorylation of PRKCA on 'Ser-657'. Within mTORC2, MLST8 acts as a bridge between MAPKAP1/SIN1 and MTOR. This is Target of rapamycin complex subunit LST8 from Rattus norvegicus (Rat).